The chain runs to 327 residues: Ribonucleoside-diphosphate reductase small chain (327 aa).

Residues D70, E101, and H104 each coordinate Fe cation. Y108 is an active-site residue. Fe cation is bound by residues E164, E198, and H201.

The protein belongs to the ribonucleoside diphosphate reductase small chain family. As to quaternary structure, heterotetramer composed of a homodimer of the large subunit (R1) and a homodimer of the small subunit (R2). Larger multisubunit protein complex are also active, composed of (R1)n(R2)n. Fe cation serves as cofactor.

The catalysed reaction is a 2'-deoxyribonucleoside 5'-diphosphate + [thioredoxin]-disulfide + H2O = a ribonucleoside 5'-diphosphate + [thioredoxin]-dithiol. Functionally, ribonucleoside-diphosphate reductase holoenzyme provides the precursors necessary for viral DNA synthesis. Allows virus growth in non-dividing cells. Catalyzes the biosynthesis of deoxyribonucleotides from the corresponding ribonucleotides. The protein is Ribonucleoside-diphosphate reductase small chain of African swine fever virus (isolate Tick/Malawi/Lil 20-1/1983) (ASFV).